The primary structure comprises 657 residues: Keratinocyte proline-rich protein (657 aa).

Disordered regions lie at residues 285–320 (QGTY…SPPR), 425–493 (HPFP…PSPE), and 517–568 (QPVP…CGQP). The span at 292 to 302 (TSQRRSQSTSR) shows a compositional bias: low complexity. Basic and acidic residues predominate over residues 434-444 (QHLDRSPESSR). Ser-442 is modified (phosphoserine). Composition is skewed to pro residues over residues 449 to 493 (VPAP…PSPE), 517 to 530 (QPVP…VPRP), and 539 to 561 (GPRP…PCSS).

The protein localises to the cytoplasm. The protein is Keratinocyte proline-rich protein of Mus musculus (Mouse).